Consider the following 200-residue polypeptide: Bombinin-like peptides 3 (200 aa).

Positions 1 to 16 (MNFKYIVAVSILIASA) form a signal peptide, or 18. Phenylalanine amide is present on residues F68 and F129.

It belongs to the bombinin family. As to expression, expressed by the skin glands.

It localises to the secreted. In terms of biological role, has antimicrobial activity, but no hemolytic activity. Preference on killing Gram-negative non-enteric bacteria. The sequence is that of Bombinin-like peptides 3 from Bombina orientalis (Oriental fire-bellied toad).